A 156-amino-acid polypeptide reads, in one-letter code: Ribosomal RNA large subunit methyltransferase H (156 aa).

S-adenosyl-L-methionine is bound by residues leucine 73, glycine 104, and 123-128 (LSPLTL).

Belongs to the RNA methyltransferase RlmH family. In terms of assembly, homodimer.

It is found in the cytoplasm. It carries out the reaction pseudouridine(1915) in 23S rRNA + S-adenosyl-L-methionine = N(3)-methylpseudouridine(1915) in 23S rRNA + S-adenosyl-L-homocysteine + H(+). Specifically methylates the pseudouridine at position 1915 (m3Psi1915) in 23S rRNA. The sequence is that of Ribosomal RNA large subunit methyltransferase H from Aliivibrio fischeri (strain ATCC 700601 / ES114) (Vibrio fischeri).